Consider the following 100-residue polypeptide: Small ribosomal subunit protein uS14c (100 aa).

This sequence belongs to the universal ribosomal protein uS14 family. As to quaternary structure, part of the 30S ribosomal subunit.

It is found in the plastid. The protein resides in the chloroplast. Binds 16S rRNA, required for the assembly of 30S particles. The chain is Small ribosomal subunit protein uS14c from Rhodomonas salina (Cryptomonas salina).